A 250-amino-acid polypeptide reads, in one-letter code: 5-oxoprolinase subunit A (250 aa).

This sequence belongs to the LamB/PxpA family. As to quaternary structure, forms a complex composed of PxpA, PxpB and PxpC.

It carries out the reaction 5-oxo-L-proline + ATP + 2 H2O = L-glutamate + ADP + phosphate + H(+). Catalyzes the cleavage of 5-oxoproline to form L-glutamate coupled to the hydrolysis of ATP to ADP and inorganic phosphate. The chain is 5-oxoprolinase subunit A from Thermus thermophilus (strain ATCC 27634 / DSM 579 / HB8).